The chain runs to 206 residues: MNLSMKQKQEGAQENVKNSPVPRRTLKMIQPSADGSLVGRENELPKGLFKRKLWDDQLASQTSSCGPEANENKDVGDLTQEAFDLISKENPSSQYWKEVAEQRRKALYEALKENEKLHKEIEQKDSEIARLRKENKDLAEVAEHVQYMAEVIERLSNEPLDNFESPDSQEFDSEEEAVEYSELEDSGAGTCAEETVSSSTDARPCT.

Residues 1 to 18 are compositionally biased toward polar residues; it reads MNLSMKQKQEGAQENVKN. Positions 1–42 are disordered; the sequence is MNLSMKQKQEGAQENVKNSPVPRRTLKMIQPSADGSLVGREN. Position 27 is an N6-acetyllysine (lysine 27). Phosphoserine is present on residues serine 36, serine 63, and serine 64. The necessary and sufficient for interaction with IDAS and CDT1 stretch occupies residues 79–158; the sequence is TQEAFDLISK…AEVIERLSNE (80 aa). Residues 91 to 141 adopt a coiled-coil conformation; the sequence is PSSQYWKEVAEQRRKALYEALKENEKLHKEIEQKDSEIARLRKENKDLAEV. Residues 157–206 are disordered; it reads NEPLDNFESPDSQEFDSEEEAVEYSELEDSGAGTCAEETVSSSTDARPCT. Over residues 167-185 the composition is skewed to acidic residues; the sequence is DSQEFDSEEEAVEYSELED. The segment at 167 to 187 is homeodomain binding; the sequence is DSQEFDSEEEAVEYSELEDSG. Serine 181 is modified (phosphoserine; by CK2). A compositionally biased stretch (polar residues) spans 195–206; sequence TVSSSTDARPCT.

The protein belongs to the geminin family. In terms of assembly, homotetramer. Interacts with CDT1; this inhibits binding of the MCM complex to origins of replication. The complex with CDT1 exists in two forms, a 'permissive' heterotrimer and an 'inhibitory' heterohexamer. Interacts (via coiled-coil domain) with IDAS (via coiled-coil domain); this targets GMNN to the nucleus. The heterodimer formed by GMNN and MCIDAS has much lower affinity for CDT1 than the GMNN homodimer. Interacts with a subset of Hox proteins, affinity increasing from anterior to posterior types, the strongest interaction being with HOXB1, HOXC9 and HOXD10. Interacts with LRWD1 from G1/S to mitosis. Phosphorylated during mitosis. Phosphorylation at Ser-181 by CK2 results in enhanced binding to Hox proteins and more potent inhibitory effect on Hox transcriptional activity.

Its subcellular location is the cytoplasm. It is found in the nucleus. Inhibits DNA replication by preventing the incorporation of MCM complex into pre-replication complex (pre-RC). It is degraded during the mitotic phase of the cell cycle. Its destruction at the metaphase-anaphase transition permits replication in the succeeding cell cycle. Inhibits histone acetyltransferase activity of KAT7/HBO1 in a CDT1-dependent manner, inhibiting histone H4 acetylation and DNA replication licensing. Inhibits the transcriptional activity of a subset of Hox proteins, enrolling them in cell proliferative control. The protein is Geminin (Gmnn) of Mus musculus (Mouse).